The following is a 228-amino-acid chain: Lipoprotein-releasing system ATP-binding protein LolD (228 aa).

An ABC transporter domain is found at 7–227 (LQLSGIERHY…TIEDGKVVEL (221 aa)). 43–50 (APSGTGKS) serves as a coordination point for ATP.

The protein belongs to the ABC transporter superfamily. Lipoprotein translocase (TC 3.A.1.125) family. In terms of assembly, the complex is composed of two ATP-binding proteins (LolD) and two transmembrane proteins (LolC and LolE).

It localises to the cell inner membrane. Its function is as follows. Part of the ABC transporter complex LolCDE involved in the translocation of mature outer membrane-directed lipoproteins, from the inner membrane to the periplasmic chaperone, LolA. Responsible for the formation of the LolA-lipoprotein complex in an ATP-dependent manner. The polypeptide is Lipoprotein-releasing system ATP-binding protein LolD (Rhizobium meliloti (strain 1021) (Ensifer meliloti)).